Reading from the N-terminus, the 216-residue chain is Small ribosomal subunit protein uS3 (216 aa).

One can recognise a KH type-2 domain in the interval 38 to 106; the sequence is LRKMLKDKLY…QANIEIKEVR (69 aa).

The protein belongs to the universal ribosomal protein uS3 family. As to quaternary structure, part of the 30S ribosomal subunit. Forms a tight complex with proteins S10 and S14.

Its function is as follows. Binds the lower part of the 30S subunit head. Binds mRNA in the 70S ribosome, positioning it for translation. The protein is Small ribosomal subunit protein uS3 of Thermodesulfovibrio yellowstonii (strain ATCC 51303 / DSM 11347 / YP87).